The following is a 285-amino-acid chain: Small ribosomal subunit protein uS3 (285 aa).

The KH type-2 domain maps to 39-107; that stretch reads VREFLKKKLK…PVAVNIEEVR (69 aa). The segment at 211–285 is disordered; it reads GDAPVMRGED…RAAPPAAKGE (75 aa). The span at 217 to 241 shows a compositional bias: basic and acidic residues; the sequence is RGEDRPEDDRRRRNPRGDRPGDRRG. Residues 242–255 are compositionally biased toward gly residues; the sequence is PGAGRGGPGAGRGP. 2 stretches are compositionally biased toward low complexity: residues 256-267 and 276-285; these read ADGASAAPSGDA and RAAPPAAKGE.

It belongs to the universal ribosomal protein uS3 family. In terms of assembly, part of the 30S ribosomal subunit. Forms a tight complex with proteins S10 and S14.

In terms of biological role, binds the lower part of the 30S subunit head. Binds mRNA in the 70S ribosome, positioning it for translation. This Leptothrix cholodnii (strain ATCC 51168 / LMG 8142 / SP-6) (Leptothrix discophora (strain SP-6)) protein is Small ribosomal subunit protein uS3.